A 537-amino-acid polypeptide reads, in one-letter code: Cytochrome P450 monooxygenase ltmQ (537 aa).

A helical transmembrane segment spans residues 10 to 30; sequence FPKLNFATIVISGATIIGIIF. N-linked (GlcNAc...) asparagine glycans are attached at residues asparagine 182, asparagine 188, and asparagine 310. A heme-binding site is contributed by cysteine 476.

This sequence belongs to the cytochrome P450 family. The cofactor is heme.

It is found in the membrane. The protein operates within secondary metabolite biosynthesis. Cytochrome P450 monooxygenase; part of the gene clusters that mediates the biosynthesis of lolitrems, indole-diterpene mycotoxins that are potent tremorgens in mammals, and are synthesized by clavicipitaceous fungal endophytes in association with their grass hosts. The geranylgeranyl diphosphate (GGPP) synthase ltmG is proposed to catalyze the first step in lolitrem biosynthesis. LtmG catalyzes a series of iterative condensations of isopentenyl diphosphate (IPP) with dimethylallyl diphosphate (DMAPP), geranyl diphosphate (GPP), and farnesyl diphosphate (FPP), to form GGPP. GGPP then condenses with indole-3-glycerol phosphate to form 3-geranylgeranylindole, an acyclic intermediate, to be incorporated into paxilline. Either ltmG or ltmC could be responsible for this step, as both are putative prenyl transferases. The FAD-dependent monooxygenase ltmM then catalyzes the epoxidation of the two terminal alkenes of the geranylgeranyl moiety, which is subsequently cyclized by ltmB, to paspaline. The cytochrome P450 monooxygenases ltmQ and ltmP can sequentially oxidize paspaline to terpendole E and terpendole F. Alternatively, ltmP converts paspaline to an intermediate which is oxidized by ltmQ to terpendole F. LtmF, ltmK, ltmE and ltmJ appear to be unique to the epichloe endophytes. The prenyltransferase ltmF is involved in the 27-hydroxyl-O-prenylation. The cytochrome P450 monooxygenase ltmK is required for the oxidative acetal ring formation. The multi-functional prenyltransferase ltmE is required for C20- and C21-prenylations of the indole ring of paspalanes and acts together with the cytochrome P450 monooxygenase ltmJ to yield lolitremanes by multiple oxidations and ring closures. The stereoisomer pairs of lolitriol and lolitrem N or lolitrem B and lolitrem F may be attributed to variations in the way in which ring closure can occur under the action of ltmJ. While the major product of this pathway is lolitrem B, the prenyl transferases and cytochrome P450 monooxygenases identified in this pathway have a remarkable versatility in their regio- and stereo-specificities to generate a diverse range of metabolites that are products of a metabolic grid rather than a linear pathway. The chain is Cytochrome P450 monooxygenase ltmQ from Epichloe festucae var. lolii (Neotyphodium lolii).